Reading from the N-terminus, the 124-residue chain is MSIYETAQQLAQQIKESDEYRDFIVAKELMKADEGHYKMIRDFQMKQFEIQQAQLFQLDISQGKQQELERLYSLLSLNPAAREYLEAEFRISRMINDVQKIIGEAIIDVLPLGFEDNDQPQILA.

It belongs to the UPF0342 family.

The chain is UPF0342 protein DSY2926 from Desulfitobacterium hafniense (strain Y51).